The chain runs to 165 residues: Alanine- and arginine-rich domain-containing protein (165 aa).

Residues 136–165 are disordered; it reads QQLKKRQDQERASKPQSPQDEEMNPECGNA.

The chain is Alanine- and arginine-rich domain-containing protein (Aard) from Rattus norvegicus (Rat).